A 356-amino-acid polypeptide reads, in one-letter code: MKRELLLEKIEEYKSLMPWFVLEYYQSKLSVPYSFTTLYEYLKEYKRFFNWLIDSGISDADDIASIHIKTLENLTKKDMESFVLYLRERPSLNTYSKKQGVSQTTINRTLSALSSLYKYLTEEVEGPDGEPYFYRNVMKKISTKKKKETLAARAENIKQKLFLGDETMKFLDYVENEYEVKLSNRAKSSFYKNKERDLAIIALLLSSGVRLSEAVNLDLKDINLKMMVIDVTRKGGQRDSVNMASFARPYLENYLSIRNKRYKAEKQDVALFLTEYRGVPNRIDASSIEKMVGKYSQDFKIRVTPHKLRHTLATRLYDATKSQVLVSHQLGHASTQVTDLYTHIVNDEQKNALDNL.

Positions 16–121 (LMPWFVLEYY…ALSSLYKYLT (106 aa)) constitute a Core-binding (CB) domain. The Tyr recombinase domain occupies 169–354 (KFLDYVENEY…VNDEQKNALD (186 aa)). Catalysis depends on residues arginine 210, lysine 234, histidine 306, arginine 309, and histidine 332. Catalysis depends on tyrosine 341, which acts as the O-(3'-phospho-DNA)-tyrosine intermediate.

Belongs to the 'phage' integrase family. XerS subfamily.

The protein localises to the cytoplasm. Its activity is regulated as follows. FtsK is required for recombination. In terms of biological role, site-specific tyrosine recombinase, which acts by catalyzing the cutting and rejoining of the recombining DNA molecules. Essential to convert dimers of the bacterial chromosome into monomers to permit their segregation at cell division. In Streptococcus thermophilus (strain ATCC BAA-491 / LMD-9), this protein is Tyrosine recombinase XerS.